The sequence spans 445 residues: MTSASAPSFNPGKGPGSAVGIALLGFGTVGTEVMRLMTEYGDELAHRIGGPLEVRGIAVSDISKPREGVAPELLTEDAFALIEREDVDIVVEVIGGIEYPREVVLAALKAGKSVVTANKALVAAHSAELADAAEAANVDLYFEAAVAGAIPVVGPLRRSLAGDQIQSVMGIVNGTTNFILDAMDSTGADYADSLAEATRLGYAEADPTADVEGHDAASKAAILASIAFHTRVTADDVYCEGISNISAADIEAAQQAGHTIKLLAICEKFTNKEGKSAISARVHPTLLPVSHPLASVNKSFNAIFVEAEAAGRLMFYGNGAGGAPTASAVLGDVVGAARNKVHGGRAPGESTYANLPIADFGETTTRYHLDMDVEDRVGVLAELASLFSEQGISLRTIRQEERDDDARLIVVTHSALESDLSRTVELLKAKPVVKAINSVIRLERD.

Phe26, Thr28, and Val29 together coordinate NADPH. Positions 29 and 58 each coordinate NAD(+). Residue Val29 coordinates NADP(+). Lys119 contacts NADPH. NADP(+) is bound at residue Lys119. Na(+) is bound by residues Glu143, Val146, Gly148, and Ile150. NADP(+)-binding residues include Gly201 and Glu204. Positions 204 and 215 each coordinate L-homoserine. Lys219 acts as the Proton donor in catalysis. Gly321 contacts NADPH. Residue Gly321 coordinates NAD(+). Gly321 lines the NADP(+) pocket. The ACT domain maps to 368-445 (HLDMDVEDRV…INSVIRLERD (78 aa)).

This sequence belongs to the homoserine dehydrogenase family. The cofactor is a metal cation.

The catalysed reaction is L-homoserine + NADP(+) = L-aspartate 4-semialdehyde + NADPH + H(+). The enzyme catalyses L-homoserine + NAD(+) = L-aspartate 4-semialdehyde + NADH + H(+). It functions in the pathway amino-acid biosynthesis; L-methionine biosynthesis via de novo pathway; L-homoserine from L-aspartate: step 3/3. Its pathway is amino-acid biosynthesis; L-threonine biosynthesis; L-threonine from L-aspartate: step 3/5. Its activity is regulated as follows. Feedback inhibition by threonine. Its function is as follows. Catalyzes the conversion of L-aspartate-beta-semialdehyde (L-Asa) to L-homoserine (L-Hse), the third step in the biosynthesis of threonine and methionine from aspartate. The chain is Homoserine dehydrogenase (hom) from Corynebacterium glutamicum (strain ATCC 13032 / DSM 20300 / JCM 1318 / BCRC 11384 / CCUG 27702 / LMG 3730 / NBRC 12168 / NCIMB 10025 / NRRL B-2784 / 534).